The following is a 515-amino-acid chain: Maturase K (515 aa).

It belongs to the intron maturase 2 family. MatK subfamily.

Its subcellular location is the plastid. The protein localises to the chloroplast. Usually encoded in the trnK tRNA gene intron. Probably assists in splicing its own and other chloroplast group II introns. This chain is Maturase K, found in Ceratophyllum demersum (Rigid hornwort).